The sequence spans 354 residues: tRNA N6-adenosine threonylcarbamoyltransferase (354 aa).

Fe cation is bound by residues H111 and H115. Substrate-binding positions include 134–138 (LVSGG), D167, G180, and N279. D319 contributes to the Fe cation binding site.

It belongs to the KAE1 / TsaD family. It depends on Fe(2+) as a cofactor.

Its subcellular location is the cytoplasm. The enzyme catalyses L-threonylcarbamoyladenylate + adenosine(37) in tRNA = N(6)-L-threonylcarbamoyladenosine(37) in tRNA + AMP + H(+). Required for the formation of a threonylcarbamoyl group on adenosine at position 37 (t(6)A37) in tRNAs that read codons beginning with adenine. Is involved in the transfer of the threonylcarbamoyl moiety of threonylcarbamoyl-AMP (TC-AMP) to the N6 group of A37, together with TsaE and TsaB. TsaD likely plays a direct catalytic role in this reaction. In Neisseria meningitidis serogroup C / serotype 2a (strain ATCC 700532 / DSM 15464 / FAM18), this protein is tRNA N6-adenosine threonylcarbamoyltransferase.